A 294-amino-acid chain; its full sequence is 33 kDa chaperonin (294 aa).

Cystine bridges form between Cys236–Cys238 and Cys269–Cys272.

Belongs to the HSP33 family. Post-translationally, under oxidizing conditions two disulfide bonds are formed involving the reactive cysteines. Under reducing conditions zinc is bound to the reactive cysteines and the protein is inactive.

The protein resides in the cytoplasm. Its function is as follows. Redox regulated molecular chaperone. Protects both thermally unfolding and oxidatively damaged proteins from irreversible aggregation. Plays an important role in the bacterial defense system toward oxidative stress. The sequence is that of 33 kDa chaperonin from Desulfotalea psychrophila (strain LSv54 / DSM 12343).